A 435-amino-acid chain; its full sequence is Transcription activator AKTR-2 (435 aa).

The segment at residues 16-43 is a DNA-binding region (zn(2)-C6 fungal-type); it reads CDFCTQSKLRCNKNKPSCRRCTIQQQVC. The interval 49-103 is disordered; it reads RRTGRPPKHPRRADDSQETSGQHGHQDPMTSAPADSCEQQSSHLDLEGDDTDFTL. The segment covering 50 to 59 has biased composition (basic residues); sequence RTGRPPKHPR.

It localises to the nucleus. Its function is as follows. Transcription factor that regulates the expression of the gene clusters that mediate the biosynthesis of the host-selective toxins (HSTs) AK-toxins responsible for Japanese pear black spot disease by the Japanese pear pathotype. AK-toxins are esters of 9,10-epoxy 8-hydroxy 9-methyldecatrienoic acid (EDA). On cellular level, AK-toxins affect plasma membrane of susceptible cells and cause a sudden increase in loss of K(+) after a few minutes of toxin treatment. This Alternaria alternata (Alternaria rot fungus) protein is Transcription activator AKTR-2.